Consider the following 66-residue polypeptide: MRARELRAQTLDQMKDELVKLKKEQFNLRFQKATGQLEKVSRVKQVRRDIARVKTFLRQKINENKV.

This sequence belongs to the universal ribosomal protein uL29 family.

The protein is Large ribosomal subunit protein uL29 of Bartonella henselae (strain ATCC 49882 / DSM 28221 / CCUG 30454 / Houston 1) (Rochalimaea henselae).